The sequence spans 421 residues: D-amino acid dehydrogenase (421 aa).

Position 3-17 (3-17 (VTILGAGVIGVTSAY)) interacts with FAD.

This sequence belongs to the DadA oxidoreductase family. FAD is required as a cofactor.

It carries out the reaction a D-alpha-amino acid + A + H2O = a 2-oxocarboxylate + AH2 + NH4(+). The protein operates within amino-acid degradation; D-alanine degradation; NH(3) and pyruvate from D-alanine: step 1/1. Oxidative deamination of D-amino acids. This chain is D-amino acid dehydrogenase, found in Allorhizobium ampelinum (strain ATCC BAA-846 / DSM 112012 / S4) (Agrobacterium vitis (strain S4)).